The following is a 260-amino-acid chain: Neuraminyllactose-binding hemagglutinin (260 aa).

The signal sequence occupies residues 1–27 (MKTNGHFKDFAWKKCFLGASVVALLVG). The N-palmitoyl cysteine moiety is linked to residue cysteine 28. Cysteine 28 carries the S-diacylglycerol cysteine lipid modification.

The protein resides in the cell outer membrane. The sequence is that of Neuraminyllactose-binding hemagglutinin (hpaA) from Helicobacter pylori (strain J99 / ATCC 700824) (Campylobacter pylori J99).